Here is a 288-residue protein sequence, read N- to C-terminus: 2-hydroxy-6-oxononadienedioate/2-hydroxy-6-oxononatrienedioate hydrolase (288 aa).

Residue His267 is the Proton acceptor of the active site.

It belongs to the AB hydrolase superfamily. MhpC family. As to quaternary structure, homodimer.

The enzyme catalyses (2Z,4E)-2-hydroxy-6-oxonona-2,4-dienedioate + H2O = (2Z)-2-hydroxypenta-2,4-dienoate + succinate + H(+). The catalysed reaction is (2Z,4E,7E)-2-hydroxy-6-oxonona-2,4,7-trienedioate + H2O = (2Z)-2-hydroxypenta-2,4-dienoate + fumarate + H(+). It functions in the pathway aromatic compound metabolism; 3-phenylpropanoate degradation. Functionally, catalyzes the cleavage of the C5-C6 bond of 2-hydroxy-6-oxononadienedioate and 2-hydroxy-6-oxononatrienedioate, a dienol ring fission product of the bacterial meta-cleavage pathway for degradation of phenylpropionic acid. The polypeptide is 2-hydroxy-6-oxononadienedioate/2-hydroxy-6-oxononatrienedioate hydrolase (Escherichia coli (strain K12 / DH10B)).